Here is a 101-residue protein sequence, read N- to C-terminus: Protein translation factor SUI1 homolog (101 aa).

Belongs to the SUI1 family.

This chain is Protein translation factor SUI1 homolog, found in Methanoregula boonei (strain DSM 21154 / JCM 14090 / 6A8).